A 62-amino-acid polypeptide reads, in one-letter code: Large ribosomal subunit protein bL32 (62 aa).

Belongs to the bacterial ribosomal protein bL32 family.

The chain is Large ribosomal subunit protein bL32 from Treponema denticola (strain ATCC 35405 / DSM 14222 / CIP 103919 / JCM 8153 / KCTC 15104).